The following is a 359-amino-acid chain: Probable dual-specificity RNA methyltransferase RlmN (359 aa).

Residue Glu-91 is the Proton acceptor of the active site. The Radical SAM core domain maps to 97-329 (QHYGHSVCVT…KKNGVNCVVR (233 aa)). Cys-104 and Cys-340 are oxidised to a cystine. The [4Fe-4S] cluster site is built by Cys-111, Cys-115, and Cys-118. Residues 163–164 (GE), Ser-195, 218–220 (SLH), and Asn-296 each bind S-adenosyl-L-methionine. Cys-340 acts as the S-methylcysteine intermediate in catalysis.

The protein belongs to the radical SAM superfamily. RlmN family. It depends on [4Fe-4S] cluster as a cofactor.

The protein resides in the cytoplasm. It catalyses the reaction adenosine(2503) in 23S rRNA + 2 reduced [2Fe-2S]-[ferredoxin] + 2 S-adenosyl-L-methionine = 2-methyladenosine(2503) in 23S rRNA + 5'-deoxyadenosine + L-methionine + 2 oxidized [2Fe-2S]-[ferredoxin] + S-adenosyl-L-homocysteine. It carries out the reaction adenosine(37) in tRNA + 2 reduced [2Fe-2S]-[ferredoxin] + 2 S-adenosyl-L-methionine = 2-methyladenosine(37) in tRNA + 5'-deoxyadenosine + L-methionine + 2 oxidized [2Fe-2S]-[ferredoxin] + S-adenosyl-L-homocysteine. Functionally, specifically methylates position 2 of adenine 2503 in 23S rRNA and position 2 of adenine 37 in tRNAs. The chain is Probable dual-specificity RNA methyltransferase RlmN from Streptococcus pyogenes serotype M3 (strain ATCC BAA-595 / MGAS315).